Reading from the N-terminus, the 268-residue chain is 4-hydroxy-tetrahydrodipicolinate reductase (268 aa).

Residues 10–15 (GASGRM) and Asp36 each bind NAD(+). Arg37 is an NADP(+) binding site. NAD(+) contacts are provided by residues 99–101 (GTT) and 123–126 (SANM). The active-site Proton donor/acceptor is the His156. His157 contacts (S)-2,3,4,5-tetrahydrodipicolinate. Lys160 functions as the Proton donor in the catalytic mechanism. 166-167 (GT) contributes to the (S)-2,3,4,5-tetrahydrodipicolinate binding site.

It belongs to the DapB family.

It localises to the cytoplasm. The catalysed reaction is (S)-2,3,4,5-tetrahydrodipicolinate + NAD(+) + H2O = (2S,4S)-4-hydroxy-2,3,4,5-tetrahydrodipicolinate + NADH + H(+). It catalyses the reaction (S)-2,3,4,5-tetrahydrodipicolinate + NADP(+) + H2O = (2S,4S)-4-hydroxy-2,3,4,5-tetrahydrodipicolinate + NADPH + H(+). It participates in amino-acid biosynthesis; L-lysine biosynthesis via DAP pathway; (S)-tetrahydrodipicolinate from L-aspartate: step 4/4. Functionally, catalyzes the conversion of 4-hydroxy-tetrahydrodipicolinate (HTPA) to tetrahydrodipicolinate. The protein is 4-hydroxy-tetrahydrodipicolinate reductase of Burkholderia mallei (strain NCTC 10247).